Reading from the N-terminus, the 294-residue chain is MPSLKDLKNRIASVKATQKITKAMKMVAAAKLRRAQEAAEAARPYSQRMNTVLANIAKAVTDADGAPVLMTGTGKDQVHLLVVCTAERGLCGGFNSQIARFARDHVRKLVAEGKTVKIFTVGKKGYDILRREFASLIVERKELREVKKIGFENADQIGKRIIEMFEAGEFDVCTLFYSEFKSVISQVPTAQQLIPAKAPEAVAEDADHAGAVYEYEPDPAAILDDLIPRNISVQIFRALLENVAGEMGAKMSAMDNATRNAGEMINKLTLSYNRQRQAQITKELIEIISGAEAL.

Belongs to the ATPase gamma chain family. As to quaternary structure, F-type ATPases have 2 components, CF(1) - the catalytic core - and CF(0) - the membrane proton channel. CF(1) has five subunits: alpha(3), beta(3), gamma(1), delta(1), epsilon(1). CF(0) has three main subunits: a, b and c.

The protein localises to the cell inner membrane. Its function is as follows. Produces ATP from ADP in the presence of a proton gradient across the membrane. The gamma chain is believed to be important in regulating ATPase activity and the flow of protons through the CF(0) complex. The polypeptide is ATP synthase gamma chain (Rhizobium etli (strain CIAT 652)).